Consider the following 102-residue polypeptide: Large ribosomal subunit protein bL21 (102 aa).

It belongs to the bacterial ribosomal protein bL21 family. As to quaternary structure, part of the 50S ribosomal subunit. Contacts protein L20.

This protein binds to 23S rRNA in the presence of protein L20. The polypeptide is Large ribosomal subunit protein bL21 (Ehrlichia canis (strain Jake)).